A 417-amino-acid chain; its full sequence is Serine hydroxymethyltransferase (417 aa).

(6S)-5,6,7,8-tetrahydrofolate contacts are provided by residues Leu-121 and 125 to 127; that span reads GHL. Lys-229 bears the N6-(pyridoxal phosphate)lysine mark. 355–357 lines the (6S)-5,6,7,8-tetrahydrofolate pocket; sequence SPF.

It belongs to the SHMT family. Homodimer. Requires pyridoxal 5'-phosphate as cofactor.

The protein localises to the cytoplasm. The catalysed reaction is (6R)-5,10-methylene-5,6,7,8-tetrahydrofolate + glycine + H2O = (6S)-5,6,7,8-tetrahydrofolate + L-serine. Its pathway is one-carbon metabolism; tetrahydrofolate interconversion. The protein operates within amino-acid biosynthesis; glycine biosynthesis; glycine from L-serine: step 1/1. Catalyzes the reversible interconversion of serine and glycine with tetrahydrofolate (THF) serving as the one-carbon carrier. This reaction serves as the major source of one-carbon groups required for the biosynthesis of purines, thymidylate, methionine, and other important biomolecules. Also exhibits THF-independent aldolase activity toward beta-hydroxyamino acids, producing glycine and aldehydes, via a retro-aldol mechanism. This Photorhabdus laumondii subsp. laumondii (strain DSM 15139 / CIP 105565 / TT01) (Photorhabdus luminescens subsp. laumondii) protein is Serine hydroxymethyltransferase.